The sequence spans 389 residues: MENINVLKSDFTKLFAKDAESVFFSPGRVNLIGEHTDYNGGNVFPCALTIGTYALVRQREDKNVLVNSLNFKELGILEFSLENMIYEKQHDWANYPKGVIKTFENHGYNIPNGFEILFYGNIPNGSGLSSSASIEVLMGTILNDLFNLNINMVDIVKMCQEAENKFIGVNCGIMDQFAIGMGKENCAILLDCNTLKYSYSTIAMDGYKIVIANTNKKRGLADSKYNERRSECETALAEIQKVKNINALGELTEEEFEEVKSCISDPIKAKRAKHAVYENRRTLKAVKALEENDLTLFGKLMNDSHISLRDDYEVTGIELDTLVSLAWKSEGVIGARMTGAGFGGCTVNIVKEDCIDSFVEKVKAEYTSKIGYEPSFYVVSISDGTRKIG.

Substrate is bound at residue 34 to 37; it reads EHTD. Residues serine 68 and 125-131 contribute to the ATP site; that span reads GSGLSSS. Positions 131 and 163 each coordinate Mg(2+). Catalysis depends on aspartate 175, which acts as the Proton acceptor. Tyrosine 225 contributes to the substrate binding site.

Belongs to the GHMP kinase family. GalK subfamily.

The protein resides in the cytoplasm. The enzyme catalyses alpha-D-galactose + ATP = alpha-D-galactose 1-phosphate + ADP + H(+). It participates in carbohydrate metabolism; galactose metabolism. In terms of biological role, catalyzes the transfer of the gamma-phosphate of ATP to D-galactose to form alpha-D-galactose-1-phosphate (Gal-1-P). The chain is Galactokinase from Clostridium beijerinckii (strain ATCC 51743 / NCIMB 8052) (Clostridium acetobutylicum).